The chain runs to 353 residues: Photosystem II D2 protein (353 aa).

Threonine 2 carries the post-translational modification N-acetylthreonine. Threonine 2 is subject to Phosphothreonine. A helical transmembrane segment spans residues 41-61; sequence CAYFALGGWFTGTTFVTSWYT. Histidine 118 serves as a coordination point for chlorophyll a. Residues 125–141 form a helical membrane-spanning segment; it reads GFMLRQFELSRSVQLRP. Pheophytin a contacts are provided by glutamine 130 and asparagine 143. The chain crosses the membrane as a helical span at residues 153 to 166; it reads VFVSVFLIYPLGQS. Residue histidine 198 participates in chlorophyll a binding. Residues 208-228 form a helical membrane-spanning segment; it reads AALLCAIHGATVENTLFEDGD. A plastoquinone contacts are provided by histidine 215 and phenylalanine 262. Histidine 215 serves as a coordination point for Fe cation. Histidine 269 is a Fe cation binding site. The helical transmembrane segment at 279-295 threads the bilayer; sequence GLWMSALGVVGLALNLR.

The protein belongs to the reaction center PufL/M/PsbA/D family. As to quaternary structure, PSII is composed of 1 copy each of membrane proteins PsbA, PsbB, PsbC, PsbD, PsbE, PsbF, PsbH, PsbI, PsbJ, PsbK, PsbL, PsbM, PsbT, PsbX, PsbY, PsbZ, Psb30/Ycf12, at least 3 peripheral proteins of the oxygen-evolving complex and a large number of cofactors. It forms dimeric complexes. The D1/D2 heterodimer binds P680, chlorophylls that are the primary electron donor of PSII, and subsequent electron acceptors. It shares a non-heme iron and each subunit binds pheophytin, quinone, additional chlorophylls, carotenoids and lipids. There is also a Cl(-1) ion associated with D1 and D2, which is required for oxygen evolution. The PSII complex binds additional chlorophylls, carotenoids and specific lipids. is required as a cofactor.

The protein localises to the plastid. It localises to the chloroplast thylakoid membrane. It catalyses the reaction 2 a plastoquinone + 4 hnu + 2 H2O = 2 a plastoquinol + O2. In terms of biological role, photosystem II (PSII) is a light-driven water:plastoquinone oxidoreductase that uses light energy to abstract electrons from H(2)O, generating O(2) and a proton gradient subsequently used for ATP formation. It consists of a core antenna complex that captures photons, and an electron transfer chain that converts photonic excitation into a charge separation. The D1/D2 (PsbA/PsbD) reaction center heterodimer binds P680, the primary electron donor of PSII as well as several subsequent electron acceptors. D2 is needed for assembly of a stable PSII complex. This Arabis hirsuta (Hairy rock-cress) protein is Photosystem II D2 protein.